The chain runs to 112 residues: Keratin-associated protein 12-4 (112 aa).

A run of 15 repeats spans residues 10–14 (CPMAC), 20–24 (CVPST), 25–29 (CYPPE), 35–39 (CCCSA), 41–45 (CVALL), 46–50 (CRPLC), 56–60 (CQPAC), 61–65 (CVPSP), 66–70 (CQVAC), 71–75 (CVPVS), 76–80 (CKPVL), 81–85 (CVASF), 86–90 (CPTSG), 91–95 (CCQPF), and 96–100 (CPTLV). Positions 10-100 (CPMACPGSPC…CCQPFCPTLV (91 aa)) are 15 X 5 AA approximate repeats.

Belongs to the KRTAP type 12 family. As to quaternary structure, interacts with hair keratins. As to expression, restricted to a narrow region of the hair fiber cuticle, lying approximately 20 cell layers above the apex of the dermal papilla of the hair root; not detected in any other tissues.

In terms of biological role, in the hair cortex, hair keratin intermediate filaments are embedded in an interfilamentous matrix, consisting of hair keratin-associated proteins (KRTAP), which are essential for the formation of a rigid and resistant hair shaft through their extensive disulfide bond cross-linking with abundant cysteine residues of hair keratins. The matrix proteins include the high-sulfur and high-glycine-tyrosine keratins. This chain is Keratin-associated protein 12-4 (KRTAP12-4), found in Homo sapiens (Human).